We begin with the raw amino-acid sequence, 98 residues long: NADH-ubiquinone oxidoreductase chain 4L (98 aa).

The next 3 helical transmembrane spans lie at 1 to 21 (MLSI…GVLI), 29 to 49 (TLLC…LLIT), and 59 to 79 (TPLI…ALLV).

Belongs to the complex I subunit 4L family. As to quaternary structure, core subunit of respiratory chain NADH dehydrogenase (Complex I) which is composed of 45 different subunits.

Its subcellular location is the mitochondrion inner membrane. The enzyme catalyses a ubiquinone + NADH + 5 H(+)(in) = a ubiquinol + NAD(+) + 4 H(+)(out). Functionally, core subunit of the mitochondrial membrane respiratory chain NADH dehydrogenase (Complex I) which catalyzes electron transfer from NADH through the respiratory chain, using ubiquinone as an electron acceptor. Part of the enzyme membrane arm which is embedded in the lipid bilayer and involved in proton translocation. The polypeptide is NADH-ubiquinone oxidoreductase chain 4L (MT-ND4L) (Sminthopsis crassicaudata (Fat-tailed dunnart)).